We begin with the raw amino-acid sequence, 313 residues long: Porphobilinogen deaminase (313 aa).

Cysteine 241 carries the post-translational modification S-(dipyrrolylmethanemethyl)cysteine.

Belongs to the HMBS family. Monomer. Requires dipyrromethane as cofactor.

It catalyses the reaction 4 porphobilinogen + H2O = hydroxymethylbilane + 4 NH4(+). It participates in porphyrin-containing compound metabolism; protoporphyrin-IX biosynthesis; coproporphyrinogen-III from 5-aminolevulinate: step 2/4. Its function is as follows. Tetrapolymerization of the monopyrrole PBG into the hydroxymethylbilane pre-uroporphyrinogen in several discrete steps. The chain is Porphobilinogen deaminase from Sulfurimonas denitrificans (strain ATCC 33889 / DSM 1251) (Thiomicrospira denitrificans (strain ATCC 33889 / DSM 1251)).